Consider the following 166-residue polypeptide: Holin-like protein TcdE (166 aa).

The next 4 membrane-spanning stretches (helical) occupy residues 15–35, 36–56, 77–97, and 111–131; these read IFFY…LSEH, IFIK…CLSA, MIAC…NFLF, and HLGI…VSIL.

It belongs to the bacteriophage holin family. In terms of assembly, homomultimer.

It is found in the cell membrane. Its function is as follows. Holin-like protein required for secretion of toxins A and B (TcdA and TcdB). Facilitates the release of toxins to the extracellular environment without causing the bacterial cell lysis. Functionally, has weak activity, suggesting that it may act as a antiholin when multiple forms are produced. This is Holin-like protein TcdE from Clostridioides difficile (Peptoclostridium difficile).